The primary structure comprises 419 residues: GTPase Obg (419 aa).

The Obg domain occupies methionine 1–leucine 158. Residues alanine 159–glutamine 324 enclose the OBG-type G domain. Residues glycine 165–serine 172, phenylalanine 190–lysine 194, aspartate 211–glycine 214, asparagine 278–aspartate 281, and serine 305–valine 307 contribute to the GTP site. Residues serine 172 and threonine 192 each contribute to the Mg(2+) site. One can recognise an OCT domain in the interval threonine 342 to leucine 419.

The protein belongs to the TRAFAC class OBG-HflX-like GTPase superfamily. OBG GTPase family. Monomer. Requires Mg(2+) as cofactor.

It is found in the cytoplasm. An essential GTPase which binds GTP, GDP and possibly (p)ppGpp with moderate affinity, with high nucleotide exchange rates and a fairly low GTP hydrolysis rate. Plays a role in control of the cell cycle, stress response, ribosome biogenesis and in those bacteria that undergo differentiation, in morphogenesis control. The protein is GTPase Obg of Aster yellows witches'-broom phytoplasma (strain AYWB).